We begin with the raw amino-acid sequence, 236 residues long: Glycoprotein U23 (236 aa).

Residues 1–17 (MLFLSFLLVCLCEEVRM) form the signal peptide. 3 N-linked (GlcNAc...) asparagine; by host glycosylation sites follow: Asn67, Asn80, and Asn103. Residues 184 to 204 (LVIWIGGISFIGAFVILIVIL) traverse the membrane as a helical segment.

The protein resides in the membrane. In Human herpesvirus 6A (strain Uganda-1102) (HHV-6 variant A), this protein is Glycoprotein U23 (U23).